Here is a 102-residue protein sequence, read N- to C-terminus: Cysteine-rich venom protein VAR9 (102 aa).

A signal peptide spans 1–19 (MILLKLYLTLAAILCQSRG). The region spanning 41–80 (NKHNDLRRTVDPPAKNMLKMSWDNIIAESAKRAALRCNYK) is the SCP domain.

The protein belongs to the CRISP family. In terms of processing, contains 8 disulfide bonds. As to expression, expressed by the venom gland.

It is found in the secreted. In terms of biological role, blocks ryanodine receptors, and potassium channels. This chain is Cysteine-rich venom protein VAR9, found in Varanus varius (Lace monitor lizard).